A 264-amino-acid chain; its full sequence is tRNA pseudouridine synthase A (264 aa).

The active-site Nucleophile is aspartate 51. Tyrosine 109 contributes to the substrate binding site.

This sequence belongs to the tRNA pseudouridine synthase TruA family. As to quaternary structure, homodimer.

It catalyses the reaction uridine(38/39/40) in tRNA = pseudouridine(38/39/40) in tRNA. Functionally, formation of pseudouridine at positions 38, 39 and 40 in the anticodon stem and loop of transfer RNAs. The chain is tRNA pseudouridine synthase A from Photorhabdus laumondii subsp. laumondii (strain DSM 15139 / CIP 105565 / TT01) (Photorhabdus luminescens subsp. laumondii).